The sequence spans 317 residues: NAC domain-containing protein 55 (317 aa).

Positions 14–162 (LPPGFRFYPT…DWVLCRIYKK (149 aa)) constitute an NAC domain. A DNA-binding region spans residues 111–168 (VGIKKALVFYIGKAPKGTKTNWIMHEYRLIEPSRRNGSTKLDDWVLCRIYKKQTSAQK).

As to expression, expressed in leaves.

It localises to the nucleus. Transcription factors that bind specifically to the 5'-CATGTG-3' motif. This chain is NAC domain-containing protein 55 (NAC055), found in Arabidopsis thaliana (Mouse-ear cress).